The primary structure comprises 174 residues: Variant surface antigen F (174 aa).

The signal sequence occupies residues 1–29 (MKKSIFSKKLLFSFGSLVALAAIPLITIS). The N-palmitoyl cysteine moiety is linked to residue C30. C30 carries the S-diacylglycerol cysteine lipid modification. Residues 32-174 (QTNTDQSQQP…PEQGNSQVSK (143 aa)) form a disordered region. Over residues 43 to 53 (SGSGSGSGTSN) the composition is skewed to gly residues. 9 repeat units span residues 55 to 67 (SGSTPTPEQGNNQ), 68 to 80 (GGSTPTPEQGNNQ), 81 to 93 (GGSTPTPEQGNNQ), 94 to 106 (GGSTPTPEQGNNQ), 107 to 119 (GGSTPTPEQGNNQ), 120 to 132 (GGSTPTPEQGNNQ), 133 to 145 (GGSTPTPEQGNNQ), 146 to 158 (GGSTPTPEQGNNQ), and 159 to 171 (GGSTPTPEQGNSQ). The tract at residues 55–171 (SGSTPTPEQG…TPTPEQGNSQ (117 aa)) is 9 X 13 AA tandem repeats. The span at 62-174 (EQGNNQGGST…PEQGNSQVSK (113 aa)) shows a compositional bias: polar residues.

The protein localises to the cell membrane. In terms of biological role, responsible for the antigenic diversity for host adaptation. Expression in E.coli of a construct containing vlpD, vlpE, and vlpF yields antigenically distinguishable products corresponding to each gene. This is Variant surface antigen F (vlpF) from Mesomycoplasma hyorhinis (Mycoplasma hyorhinis).